We begin with the raw amino-acid sequence, 305 residues long: PI-PLC X domain-containing protein 2 (305 aa).

Residues 42 to 215 (HLHNLPLSNL…NCQVLIFYHC (174 aa)) form the PI-PLC X-box domain. Residues His-57 and His-132 contribute to the active site.

Widely expressed.

The protein resides in the nucleus. It catalyses the reaction a 1,2-diacyl-sn-glycero-3-phospho-(1D-myo-inositol) + H2O = 1D-myo-inositol 1-phosphate + a 1,2-diacyl-sn-glycerol + H(+). Catalyzes the hydrolysis of inositol from phosphatidylinositol (1,2-diacyl-sn-glycero-3-phospho-(1D-myo-inositol), PI). Could also hydrolyze various multi-phosphorylated derivatives of PI, such as phosphatidylinositol-4,5 bisphosphate (PIP2), releasing inositol-1,4,5-trisphosphate (IP3) and the protein kinase C activator diacylglycerol (DAG), therefore mediating cell signaling. This chain is PI-PLC X domain-containing protein 2 (PLCXD2), found in Homo sapiens (Human).